The primary structure comprises 470 residues: Acetyl-CoA decarbonylase/synthase complex subunit gamma 1 (470 aa).

The 4Fe-4S domain maps to 1–60 (MKINSPLEAYKYLPQTNCGECGQPTCMAFASTLIDRSGKTTDCPPLIKEKKFAKKLAELD). Cys18, Cys21, Cys26, and Cys43 together coordinate [4Fe-4S] cluster.

In terms of assembly, heterodimer of delta and gamma chains. The ACDS complex is made up of alpha, epsilon, beta, gamma and delta chains with a probable stoichiometry of (alpha(2)epsilon(2))(4)-beta(8)-(gamma(1)delta(1))(8). Corrinoid is required as a cofactor. Requires [4Fe-4S] cluster as cofactor.

It catalyses the reaction 5,6,7,8-tetrahydrosarcinapterin + methyl-Co(III)-[corrinoid Fe-S protein] = 5-methyltetrahydrosarcinapterin + Co(I)-[corrinoid Fe-S protein] + H(+). Its pathway is one-carbon metabolism; methanogenesis from acetate. Its function is as follows. Part of a complex that catalyzes the reversible cleavage of acetyl-CoA, allowing growth on acetate as sole source of carbon and energy. This Methanosarcina mazei (strain ATCC BAA-159 / DSM 3647 / Goe1 / Go1 / JCM 11833 / OCM 88) (Methanosarcina frisia) protein is Acetyl-CoA decarbonylase/synthase complex subunit gamma 1.